The primary structure comprises 86 residues: DNA-directed RNA polymerase subunit omega (86 aa).

Positions 67–76 (SAREHAKESQ) are enriched in basic and acidic residues. The segment at 67-86 (SAREHAKESQVSEEEVREES) is disordered. Over residues 77-86 (VSEEEVREES) the composition is skewed to acidic residues.

Belongs to the RNA polymerase subunit omega family. As to quaternary structure, the RNAP catalytic core consists of 2 alpha, 1 beta, 1 beta' and 1 omega subunit. When a sigma factor is associated with the core the holoenzyme is formed, which can initiate transcription.

It carries out the reaction RNA(n) + a ribonucleoside 5'-triphosphate = RNA(n+1) + diphosphate. Functionally, promotes RNA polymerase assembly. Latches the N- and C-terminal regions of the beta' subunit thereby facilitating its interaction with the beta and alpha subunits. The sequence is that of DNA-directed RNA polymerase subunit omega from Nitrosococcus oceani (strain ATCC 19707 / BCRC 17464 / JCM 30415 / NCIMB 11848 / C-107).